A 261-amino-acid polypeptide reads, in one-letter code: Tryptophan synthase alpha chain (261 aa).

Residues glutamate 47 and aspartate 58 each act as proton acceptor in the active site.

Belongs to the TrpA family. Tetramer of two alpha and two beta chains.

The catalysed reaction is (1S,2R)-1-C-(indol-3-yl)glycerol 3-phosphate + L-serine = D-glyceraldehyde 3-phosphate + L-tryptophan + H2O. It functions in the pathway amino-acid biosynthesis; L-tryptophan biosynthesis; L-tryptophan from chorismate: step 5/5. In terms of biological role, the alpha subunit is responsible for the aldol cleavage of indoleglycerol phosphate to indole and glyceraldehyde 3-phosphate. In Neisseria gonorrhoeae (strain ATCC 700825 / FA 1090), this protein is Tryptophan synthase alpha chain.